The primary structure comprises 428 residues: Hydrolase acrC (428 aa).

Serine 248 is an active-site residue.

Belongs to the AB hydrolase superfamily. FUS2 hydrolase family.

Its pathway is secondary metabolite biosynthesis. Functionally, hydrolase; part of the cluster that mediates the biosynthesis of acurin A, a highly reduced polyketide coupled to a serine via a peptide bond. The activities of the highly reducing polyketide synthase acrA and the nonribosomal peptide synthetase acrB are collectively responsible for the synthesis of the acurin A core structure with a heptaketide backbone produced by acrA covalently fused to a L-serine by acrB. After the formation of the PK-NRP hybrid product, it is detached from acrB by reductive release to set up the formation of the lactam ring by aldol condensation. The hydrolyase acrC then catalyzes water loss to generate a double bond in the ring. This double bond is probably reduced, which is followed by three oxidations at C-22 to generate the carboxylic acid moiety, involving probably the FAD-binding monooxygenase acrE and the cytochrome P450 monooxygenases acrD and acrF. Finally, a last methylation step performed by the O-methyltransferase acrG leads to the production of acurin A. This is Hydrolase acrC from Aspergillus aculeatus (strain ATCC 16872 / CBS 172.66 / WB 5094).